Reading from the N-terminus, the 330-residue chain is MKIAIDAMGGDHAPKAVVLGAMKAIKEYSDLHITLVGKEEEIRQYLTSDERITILHTDEKIESTEEPVRAVRRKKQASMVLAAQQVKDGEADACISAGSTGALMAAGLFVVGRMEGIERPALSPTMPTVDGKGFVMLDVGANVDAKPIHLYQYAVMGSVYAEKVRGIENPRVGLLNVGTEDEKGNELSKQVFAMLKDAPINFVGNVESRDLLQGVADVVVCDGFTGNVALKSLEGTALALFSMLKEQLMSSFTSKLAAAVLKPKLMVLKDKMDYSEYGGAALFGLKAPVIKAHGSSNDQSIFSAIRQTREMVAKEVIPTISSVMEKESLQ.

This sequence belongs to the PlsX family. As to quaternary structure, homodimer. Probably interacts with PlsY.

The protein resides in the cytoplasm. It carries out the reaction a fatty acyl-[ACP] + phosphate = an acyl phosphate + holo-[ACP]. It functions in the pathway lipid metabolism; phospholipid metabolism. In terms of biological role, catalyzes the reversible formation of acyl-phosphate (acyl-PO(4)) from acyl-[acyl-carrier-protein] (acyl-ACP). This enzyme utilizes acyl-ACP as fatty acyl donor, but not acyl-CoA. The polypeptide is Phosphate acyltransferase (Bacillus cereus (strain B4264)).